The primary structure comprises 833 residues: Mannosyl-oligosaccharide glucosidase (833 aa).

Residues 1 to 10 (MLISKSKMFK) are Cytoplasmic-facing. A helical; Signal-anchor for type II membrane protein membrane pass occupies residues 11–28 (TFWILTSIVLLASATVDI). Topologically, residues 29–833 (SKLQEFEEYQ…ALVVNILGRF (805 aa)) are lumenal. Residues Asn42 and Asn122 each contribute to the substrate site. 3 N-linked (GlcNAc...) asparagine glycosylation sites follow: Asn42, Asn122, and Asn135. Residue Glu143 coordinates substrate. Asp601 (proton donor) is an active-site residue. Cys669 and Cys685 form a disulfide bridge. Asn787 carries an N-linked (GlcNAc...) asparagine glycan. Glu804 functions as the Proton acceptor in the catalytic mechanism.

The protein belongs to the glycosyl hydrolase 63 family. N-glycosylated.

Its subcellular location is the endoplasmic reticulum membrane. The enzyme catalyses N(4)-(alpha-D-Glc-(1-&gt;2)-alpha-D-Glc-(1-&gt;3)-alpha-D-Glc-(1-&gt;3)-alpha-D-Man-(1-&gt;2)-alpha-D-Man-(1-&gt;2)-alpha-D-Man-(1-&gt;3)-[alpha-D-Man-(1-&gt;2)-alpha-D-Man-(1-&gt;3)-[alpha-D-Man-(1-&gt;2)-alpha-D-Man-(1-&gt;6)]-alpha-D-Man-(1-&gt;6)]-beta-D-Man-(1-&gt;4)-beta-D-GlcNAc-(1-&gt;4)-beta-D-GlcNAc)-L-asparaginyl-[protein] + H2O = N(4)-(alpha-D-Glc-(1-&gt;3)-alpha-D-Glc-(1-&gt;3)-alpha-D-Man-(1-&gt;2)-alpha-D-Man-(1-&gt;2)-alpha-D-Man-(1-&gt;3)-[alpha-D-Man-(1-&gt;2)-alpha-D-Man-(1-&gt;3)-[alpha-D-Man-(1-&gt;2)-alpha-D-Man-(1-&gt;6)]-alpha-D-Man-(1-&gt;6)]-beta-D-Man-(1-&gt;4)-beta-D-GlcNAc-(1-&gt;4)-beta-D-GlcNAc)-L-asparaginyl-[protein] + beta-D-glucose. It participates in glycan metabolism; N-glycan degradation. Its activity is regulated as follows. Miglitol is an effective inhibitor at 1 mM. Cleaves the distal alpha 1,2-linked glucose residue from the Glc(3)Man(9)GlcNAc(2) oligosaccharide precursor highly specifically. Seems to play a role in beta-1,6-glucan synthesis. This chain is Mannosyl-oligosaccharide glucosidase (CWH41), found in Saccharomyces cerevisiae (strain ATCC 204508 / S288c) (Baker's yeast).